A 267-amino-acid polypeptide reads, in one-letter code: 3-methyl-2-oxobutanoate hydroxymethyltransferase (267 aa).

Residues D42 and D86 each coordinate Mg(2+). Residues 42 to 43, D86, and K116 each bind 3-methyl-2-oxobutanoate; that span reads DS. Residue E118 coordinates Mg(2+). The Proton acceptor role is filled by E185.

This sequence belongs to the PanB family. As to quaternary structure, homodecamer; pentamer of dimers. Mg(2+) is required as a cofactor.

The protein localises to the cytoplasm. The catalysed reaction is 3-methyl-2-oxobutanoate + (6R)-5,10-methylene-5,6,7,8-tetrahydrofolate + H2O = 2-dehydropantoate + (6S)-5,6,7,8-tetrahydrofolate. It participates in cofactor biosynthesis; (R)-pantothenate biosynthesis; (R)-pantoate from 3-methyl-2-oxobutanoate: step 1/2. Its function is as follows. Catalyzes the reversible reaction in which hydroxymethyl group from 5,10-methylenetetrahydrofolate is transferred onto alpha-ketoisovalerate to form ketopantoate. In Parasynechococcus marenigrum (strain WH8102), this protein is 3-methyl-2-oxobutanoate hydroxymethyltransferase.